Consider the following 120-residue polypeptide: Large ribosomal subunit protein uL18 (120 aa).

It belongs to the universal ribosomal protein uL18 family. Part of the 50S ribosomal subunit; part of the 5S rRNA/L5/L18/L25 subcomplex. Contacts the 5S and 23S rRNAs.

Functionally, this is one of the proteins that bind and probably mediate the attachment of the 5S RNA into the large ribosomal subunit, where it forms part of the central protuberance. The sequence is that of Large ribosomal subunit protein uL18 from Rhodopseudomonas palustris (strain BisB5).